The sequence spans 283 residues: Elongation factor Ts (283 aa).

Residues 80–83 (TDFV) are involved in Mg(2+) ion dislocation from EF-Tu.

It belongs to the EF-Ts family.

It is found in the cytoplasm. Functionally, associates with the EF-Tu.GDP complex and induces the exchange of GDP to GTP. It remains bound to the aminoacyl-tRNA.EF-Tu.GTP complex up to the GTP hydrolysis stage on the ribosome. The chain is Elongation factor Ts from Actinobacillus pleuropneumoniae serotype 3 (strain JL03).